The sequence spans 224 residues: Peroxynitrite isomerase 2 (224 aa).

A GXWXGXG motif is present at residues 71–77 (GVWRGEG). Lys-187 and His-214 together coordinate heme b.

This sequence belongs to the nitrobindin family. As to quaternary structure, homodimer. Requires heme b as cofactor.

The enzyme catalyses peroxynitrite = nitrate. Its pathway is nitrogen metabolism. Its function is as follows. Heme-binding protein able to scavenge peroxynitrite and to protect free L-tyrosine against peroxynitrite-mediated nitration, by acting as a peroxynitrite isomerase that converts peroxynitrite to nitrate. Therefore, this protein likely plays a role in peroxynitrite sensing and in the detoxification of reactive nitrogen and oxygen species (RNS and ROS, respectively). Is able to bind nitric oxide (NO) in vitro, but may act as a sensor of peroxynitrite levels in vivo. The protein is Peroxynitrite isomerase 2 of Mycobacterium sp. (strain JLS).